The chain runs to 96 residues: Exodeoxyribonuclease 7 small subunit (96 aa).

The interval 73–96 (RAPEQSAANDVSAPGSAEEHDHGR) is disordered.

Belongs to the XseB family. As to quaternary structure, heterooligomer composed of large and small subunits.

The protein localises to the cytoplasm. It carries out the reaction Exonucleolytic cleavage in either 5'- to 3'- or 3'- to 5'-direction to yield nucleoside 5'-phosphates.. In terms of biological role, bidirectionally degrades single-stranded DNA into large acid-insoluble oligonucleotides, which are then degraded further into small acid-soluble oligonucleotides. In Acidothermus cellulolyticus (strain ATCC 43068 / DSM 8971 / 11B), this protein is Exodeoxyribonuclease 7 small subunit.